The chain runs to 475 residues: Tesmin (475 aa).

Phosphoserine occurs at positions 34 and 67. The region spanning 263-372 (SGPALQGPPK…KCIACKNYEE (110 aa)) is the CRC domain.

The protein belongs to the lin-54 family.

Its subcellular location is the cytoplasm. It localises to the nucleus. May have a role in spermatogenesis. The chain is Tesmin from Rattus norvegicus (Rat).